The sequence spans 627 residues: uncharacterized protein (627 aa).

2 disordered regions span residues 141-187 and 490-510; these read LRYP…TPPS and ENENTNGSANNSTYTNGGPRT. Residues 491 to 510 show a composition bias toward polar residues; that stretch reads NENTNGSANNSTYTNGGPRT. Position 559 is a phosphoserine (S559).

This is an uncharacterized protein from Saccharomyces cerevisiae (strain ATCC 204508 / S288c) (Baker's yeast).